Reading from the N-terminus, the 487-residue chain is Protein nucleotidyltransferase YdiU (487 aa).

Residues G92, R95, K106, D118, G119, R169, and R176 each contribute to the ATP site. The active-site Proton acceptor is the D253. Mg(2+) contacts are provided by N254 and D263. D263 contributes to the ATP binding site.

Belongs to the SELO family. Mg(2+) is required as a cofactor. It depends on Mn(2+) as a cofactor.

It carries out the reaction L-seryl-[protein] + ATP = 3-O-(5'-adenylyl)-L-seryl-[protein] + diphosphate. It catalyses the reaction L-threonyl-[protein] + ATP = 3-O-(5'-adenylyl)-L-threonyl-[protein] + diphosphate. The catalysed reaction is L-tyrosyl-[protein] + ATP = O-(5'-adenylyl)-L-tyrosyl-[protein] + diphosphate. The enzyme catalyses L-histidyl-[protein] + UTP = N(tele)-(5'-uridylyl)-L-histidyl-[protein] + diphosphate. It carries out the reaction L-seryl-[protein] + UTP = O-(5'-uridylyl)-L-seryl-[protein] + diphosphate. It catalyses the reaction L-tyrosyl-[protein] + UTP = O-(5'-uridylyl)-L-tyrosyl-[protein] + diphosphate. Functionally, nucleotidyltransferase involved in the post-translational modification of proteins. It can catalyze the addition of adenosine monophosphate (AMP) or uridine monophosphate (UMP) to a protein, resulting in modifications known as AMPylation and UMPylation. This chain is Protein nucleotidyltransferase YdiU, found in Bordetella pertussis (strain Tohama I / ATCC BAA-589 / NCTC 13251).